Reading from the N-terminus, the 630-residue chain is Heat shock cognate 70 kDa protein 3 (630 aa).

The disordered stretch occupies residues 611–630; that stretch reads FYQGNNNPKPTTTTFNQDLD. Residues 615 to 630 are compositionally biased toward low complexity; the sequence is NNNPKPTTTTFNQDLD.

This sequence belongs to the heat shock protein 70 family.

In terms of biological role, may function in protein folding and assembly, and disassembly of protein complexes. The protein is Heat shock cognate 70 kDa protein 3 of Dictyostelium discoideum (Social amoeba).